The chain runs to 389 residues: Acetate kinase (389 aa).

Mg(2+) is bound at residue asparagine 9. An ATP-binding site is contributed by lysine 16. Arginine 77 is a substrate binding site. Aspartate 134 (proton donor/acceptor) is an active-site residue. Residues 194 to 198, 268 to 270, and 316 to 320 contribute to the ATP site; these read HLGNG, DFR, and GVGEN. Glutamate 370 serves as a coordination point for Mg(2+).

Belongs to the acetokinase family. In terms of assembly, homodimer. Requires Mg(2+) as cofactor. It depends on Mn(2+) as a cofactor.

The protein localises to the cytoplasm. The enzyme catalyses acetate + ATP = acetyl phosphate + ADP. It functions in the pathway metabolic intermediate biosynthesis; acetyl-CoA biosynthesis; acetyl-CoA from acetate: step 1/2. Catalyzes the formation of acetyl phosphate from acetate and ATP. Can also catalyze the reverse reaction. The sequence is that of Acetate kinase from Mycolicibacterium vanbaalenii (strain DSM 7251 / JCM 13017 / BCRC 16820 / KCTC 9966 / NRRL B-24157 / PYR-1) (Mycobacterium vanbaalenii).